The following is a 240-amino-acid chain: Protein MGARP (240 aa).

Over 1 to 40 (MYLRRAVSKTLALPLRAPPNPAPLGKDASLRRMSSNRFPG) the chain is Cytoplasmic. Residues 41-63 (SSGSNMIYYLVVGVTVSAGGYYA) form a helical; Anchor for type IV membrane protein membrane-spanning segment. Residues 64–240 (YKTVTSDQAK…VGSEAASAQG (177 aa)) lie on the Mitochondrial intermembrane side of the membrane. The segment at 166-240 (RETTEVNPET…VGSEAASAQG (75 aa)) is disordered. The segment covering 170-181 (EVNPETTPEVTN) has biased composition (low complexity). Residues 191–201 (DNDKDTTKNET) are compositionally biased toward basic and acidic residues. A compositionally biased stretch (acidic residues) spans 202–213 (SDEYAELEEENS). Over residues 228–240 (EASVGSEAASAQG) the composition is skewed to low complexity.

As to quaternary structure, interacts with RHOT1/Miro-1, TRAK1/OIP106 and TRAK2/GRIF1. Interacts with RHOT2/Miro-2. Expressed in the brain, adrenal gland and corneal endothelium (CE). Expressed in steroid-producing cells of the ovary and testis (at protein level). Expressed in steroid-producing cells of the ovary and testis. Weakly expressed in placenta. Expressed in corneal endothelial cells.

It localises to the mitochondrion. It is found in the mitochondrion outer membrane. Its subcellular location is the mitochondrion inner membrane. Plays a role in the trafficking of mitochondria along microtubules. Regulates the kinesin-mediated axonal transport of mitochondria to nerve terminals along microtubules during hypoxia. Participates in the translocation of TRAK2/GRIF1 from the cytoplasm to the mitochondrion. Also plays a role in steroidogenesis through maintenance of mitochondrial abundance and morphology. Plays an inhibitory role during neocortex development by regulating mitochondrial morphology, distribution and motility in neocortical neurons. This chain is Protein MGARP (MGARP), found in Homo sapiens (Human).